We begin with the raw amino-acid sequence, 1555 residues long: Glycogen debranching enzyme (1555 aa).

At Ser-87 the chain carries Phosphoserine. Residues Asp-549, His-552, and Asp-650 contribute to the active site.

This sequence belongs to the glycogen debranching enzyme family. In terms of assembly, monomer. Interacts with NHLRC1/malin. Post-translationally, the N-terminus is blocked. Ubiquitinated.

It is found in the cytoplasm. It carries out the reaction Transfers a segment of a (1-&gt;4)-alpha-D-glucan to a new position in an acceptor, which may be glucose or a (1-&gt;4)-alpha-D-glucan.. The catalysed reaction is Hydrolysis of (1-&gt;6)-alpha-D-glucosidic branch linkages in glycogen phosphorylase limit dextrin.. Multifunctional enzyme acting as 1,4-alpha-D-glucan:1,4-alpha-D-glucan 4-alpha-D-glycosyltransferase and amylo-1,6-glucosidase in glycogen degradation. In Oryctolagus cuniculus (Rabbit), this protein is Glycogen debranching enzyme (AGL).